The following is a 232-amino-acid chain: Small ribosomal subunit protein uS3 (232 aa).

A KH type-2 domain is found at 39–107 (VRQFLTSELK…PAQINIAEVR (69 aa)). The interval 213-232 (AANAVEPKGDKPKKQRKGRK) is disordered.

The protein belongs to the universal ribosomal protein uS3 family. In terms of assembly, part of the 30S ribosomal subunit. Forms a tight complex with proteins S10 and S14.

Its function is as follows. Binds the lower part of the 30S subunit head. Binds mRNA in the 70S ribosome, positioning it for translation. The protein is Small ribosomal subunit protein uS3 of Vibrio parahaemolyticus serotype O3:K6 (strain RIMD 2210633).